The following is a 602-amino-acid chain: Adenylosuccinate synthetase (602 aa).

GTP contacts are provided by residues 74-80 (GDEGKGK) and 104-106 (GHT). D75 acts as the Proton acceptor in catalysis. Residues D75 and G104 each coordinate Mg(2+). IMP is bound by residues 75–78 (DEGK), 102–105 (NAGH), T189, K203, Q315, T331, and K459. Residue H105 is the Proton donor of the active site. 455 to 461 (AVTKKPR) is a binding site for substrate. Residues R461 and 589 to 591 (GNG) contribute to the GTP site.

Belongs to the adenylosuccinate synthetase family. In terms of assembly, homodimer. The cofactor is Mg(2+).

The protein resides in the cytoplasm. The catalysed reaction is IMP + L-aspartate + GTP = N(6)-(1,2-dicarboxyethyl)-AMP + GDP + phosphate + 2 H(+). It functions in the pathway purine metabolism; AMP biosynthesis via de novo pathway; AMP from IMP: step 1/2. Its function is as follows. Plays an important role in the salvage pathway for purine nucleotide biosynthesis. Catalyzes the first committed step in the biosynthesis of AMP from IMP. This chain is Adenylosuccinate synthetase, found in Trypanosoma brucei gambiense (strain MHOM/CI/86/DAL972).